The following is a 283-amino-acid chain: Coiled-coil domain-containing protein 107 (283 aa).

The first 24 residues, 1 to 24, serve as a signal peptide directing secretion; that stretch reads MAGAVSLLGVVGLLLVSALSGVLG. The segment at 30–62 is disordered; sequence DLRAHPGNAAHPGSGATEPRRRPPLKDQRERTR. Positions 47-62 are enriched in basic and acidic residues; sequence EPRRRPPLKDQRERTR. The chain crosses the membrane as a helical span at residues 65-85; that stretch reads SLPLGALYTAAVAAFVLYKCL. Positions 104 to 134 form a coiled coil; that stretch reads LQSEQQLAQLTQQLAQTEQHLNNLMAQLDPL. Disordered regions lie at residues 164-207 and 258-283; these read KPDK…SRPL and AKGP…SLFS. A compositionally biased stretch (gly residues) spans 176 to 187; the sequence is EGSGGESAGGGD.

It localises to the membrane. This chain is Coiled-coil domain-containing protein 107 (CCDC107), found in Homo sapiens (Human).